The chain runs to 314 residues: Methionyl-tRNA formyltransferase (314 aa).

Residue 108–111 (SLLP) coordinates (6S)-5,6,7,8-tetrahydrofolate.

It belongs to the Fmt family.

It catalyses the reaction L-methionyl-tRNA(fMet) + (6R)-10-formyltetrahydrofolate = N-formyl-L-methionyl-tRNA(fMet) + (6S)-5,6,7,8-tetrahydrofolate + H(+). Attaches a formyl group to the free amino group of methionyl-tRNA(fMet). The formyl group appears to play a dual role in the initiator identity of N-formylmethionyl-tRNA by promoting its recognition by IF2 and preventing the misappropriation of this tRNA by the elongation apparatus. The sequence is that of Methionyl-tRNA formyltransferase from Akkermansia muciniphila (strain ATCC BAA-835 / DSM 22959 / JCM 33894 / BCRC 81048 / CCUG 64013 / CIP 107961 / Muc).